Here is a 124-residue protein sequence, read N- to C-terminus: Large ribosomal subunit protein bL12 (124 aa).

This sequence belongs to the bacterial ribosomal protein bL12 family. In terms of assembly, homodimer. Part of the ribosomal stalk of the 50S ribosomal subunit. Forms a multimeric L10(L12)X complex, where L10 forms an elongated spine to which 2 to 4 L12 dimers bind in a sequential fashion. Binds GTP-bound translation factors.

Its function is as follows. Forms part of the ribosomal stalk which helps the ribosome interact with GTP-bound translation factors. Is thus essential for accurate translation. This is Large ribosomal subunit protein bL12 from Ralstonia pickettii (strain 12J).